A 698-amino-acid polypeptide reads, in one-letter code: Macrophomene synthase (698 aa).

The interval 21–340 (MEYMYSVPLD…SCDRYSSYRR (320 aa)) is terpene cyclase. Aspartate 113 is a Mg(2+) binding site. The DDXXD 1 signature appears at 113 to 117 (DNIAE). The short motif at 242-250 (NDFFSFNYE) is the NSE/DTE element. Positions 341–696 (EKHQMELPIR…IQLALERLRI (356 aa)) are prenyltransferase. The interval 368-387 (LPNGKQLDAPTESSGKDLSD) is disordered. Residues lysine 417, arginine 420, and histidine 449 each contribute to the isopentenyl diphosphate site. Mg(2+) contacts are provided by aspartate 456 and aspartate 460. Positions 456 to 460 (DDIED) match the DDXXD 2 motif. Arginine 465 provides a ligand contact to dimethylallyl diphosphate. Arginine 466 is an isopentenyl diphosphate binding site. Dimethylallyl diphosphate is bound by residues lysine 543, threonine 544, glutamine 579, asparagine 586, lysine 596, and lysine 606.

In the N-terminal section; belongs to the terpene synthase family. It in the C-terminal section; belongs to the FPP/GGPP synthase family. As to quaternary structure, hexamer. Mg(2+) is required as a cofactor.

The enzyme catalyses 5 isopentenyl diphosphate + dimethylallyl diphosphate = all-trans-hexaprenyl diphosphate + 5 diphosphate. It catalyses the reaction all-trans-hexaprenyl diphosphate = macrophomene + diphosphate. In terms of biological role, bifunctional terpene synthase that converts dimethylallyl diphosphate (DMAPP) and isopentenyl diphosphate (IPP) into macrophomene as a single product. The C-terminal prenyltransferase (PT) domain of MpMS catalyzes formation of hexaprenyl diphosphate (HexPP), whereas the N-terminal terpene cyclase (TC) domain catalyzes the cyclization of HexPP to macrophomene. This Macrophomina phaseolina (strain MS6) (Charcoal rot fungus) protein is Macrophomene synthase.